We begin with the raw amino-acid sequence, 647 residues long: RAF proto-oncogene serine/threonine-protein kinase (647 aa).

Residue serine 43 is modified to Phosphoserine. The RBD domain maps to 56–131; that stretch reads NTIRVFLPNK…IGEELQVDFL (76 aa). The Phorbol-ester/DAG-type zinc finger occupies 138–184; it reads THNFARKTFLKLAFCDICQKFLLNGFRCQTCGYKFHEHCSTKVPTMC. Disordered regions lie at residues 236 to 269 and 284 to 334; these read HVFTFNTSNPSSEGTLSQRQRSTSTPNVHMVSTT and HSES…RPRG. Over residues 239–269 the composition is skewed to polar residues; sequence TFNTSNPSSEGTLSQRQRSTSTPNVHMVSTT. The residue at position 259 (serine 259) is a Phosphoserine. Threonine 268 carries the post-translational modification Phosphothreonine; by autocatalysis. Residues 286 to 297 are compositionally biased toward low complexity; the sequence is ESASPSALSGSP. The segment covering 298–309 has biased composition (polar residues); it reads NNMSPTGWSQPK. Serine 338 is subject to Phosphoserine. Positions 349–609 constitute a Protein kinase domain; it reads VMLSTRIGSG…PQILSSIELL (261 aa). ATP contacts are provided by residues 355–363 and lysine 375; that span reads IGSGSFGTV. The active-site Proton acceptor is the aspartate 468. Phosphoserine is present on residues serine 499 and serine 621.

It belongs to the protein kinase superfamily. TKL Ser/Thr protein kinase family. RAF subfamily. Phosphorylation at Ser-259 inactivates kinase activity. Dephosphorylation of Ser-259 by a complex containing protein phosphatase 1 relieves inactivation, leading to stimulate RAF1 activity. In terms of tissue distribution, isoform 1 was present in all tissues tested: skeletal muscle, intestine, brain, gizzard, heart, lung, kidney, bone marrow, spleen and bursa of Fabricius. Isoform 2 was only detected in brain, heart and skeletal muscle. In brain and heart isoform 1 is more abundant than isoform 2. In skeletal muscle isoform 2 is more abundant than isoform 1.

The protein localises to the cytoplasm. It localises to the cell membrane. The enzyme catalyses L-seryl-[protein] + ATP = O-phospho-L-seryl-[protein] + ADP + H(+). The catalysed reaction is L-threonyl-[protein] + ATP = O-phospho-L-threonyl-[protein] + ADP + H(+). In terms of biological role, serine/threonine-protein kinase that acts as a regulatory link between the membrane-associated Ras GTPases and the MAPK/ERK cascade, and this critical regulatory link functions as a switch determining cell fate decisions. RAF1 activation initiates a mitogen-activated protein kinase (MAPK) cascade that comprises a sequential phosphorylation of the dual-specific MAPK kinases (MAP2K1/MEK1 and MAP2K2/MEK2) and the extracellular signal-regulated kinases (MAPK3/ERK1 and MAPK1/ERK2). This chain is RAF proto-oncogene serine/threonine-protein kinase (RAF1), found in Gallus gallus (Chicken).